The primary structure comprises 128 residues: Translation initiation factor 5A (128 aa).

K35 carries the hypusine modification.

Belongs to the eIF-5A family.

Its subcellular location is the cytoplasm. In terms of biological role, functions by promoting the formation of the first peptide bond. In Methanosarcina mazei (strain ATCC BAA-159 / DSM 3647 / Goe1 / Go1 / JCM 11833 / OCM 88) (Methanosarcina frisia), this protein is Translation initiation factor 5A (eif5a).